The chain runs to 156 residues: Small ribosomal subunit protein uS7 (156 aa).

The protein belongs to the universal ribosomal protein uS7 family. As to quaternary structure, part of the 30S ribosomal subunit. Contacts proteins S9 and S11.

One of the primary rRNA binding proteins, it binds directly to 16S rRNA where it nucleates assembly of the head domain of the 30S subunit. Is located at the subunit interface close to the decoding center, probably blocks exit of the E-site tRNA. This is Small ribosomal subunit protein uS7 from Geobacillus sp. (strain WCH70).